A 550-amino-acid chain; its full sequence is Arginine--tRNA ligase (550 aa).

The 'HIGH' region signature appears at 130-140 (ANPTGPIHIGG).

This sequence belongs to the class-I aminoacyl-tRNA synthetase family. In terms of assembly, monomer.

Its subcellular location is the cytoplasm. It catalyses the reaction tRNA(Arg) + L-arginine + ATP = L-arginyl-tRNA(Arg) + AMP + diphosphate. This Mycobacterium marinum (strain ATCC BAA-535 / M) protein is Arginine--tRNA ligase.